A 139-amino-acid polypeptide reads, in one-letter code: NADPH-dependent 7-cyano-7-deazaguanine reductase (139 aa).

Cys34 (thioimide intermediate) is an active-site residue. The Proton donor role is filled by Asp41. Substrate contacts are provided by residues Ile56 to Leu58 and His75 to Glu76.

It belongs to the GTP cyclohydrolase I family. QueF type 1 subfamily.

The protein resides in the cytoplasm. The catalysed reaction is 7-aminomethyl-7-carbaguanine + 2 NADP(+) = 7-cyano-7-deazaguanine + 2 NADPH + 3 H(+). It functions in the pathway tRNA modification; tRNA-queuosine biosynthesis. Functionally, catalyzes the NADPH-dependent reduction of 7-cyano-7-deazaguanine (preQ0) to 7-aminomethyl-7-deazaguanine (preQ1). This Nitrosomonas europaea (strain ATCC 19718 / CIP 103999 / KCTC 2705 / NBRC 14298) protein is NADPH-dependent 7-cyano-7-deazaguanine reductase.